The sequence spans 223 residues: MRILANLILLGVLFGVCLCQGCGDSDDDGQDDCTGDCGDGDFDGVDDCTGNCGDSDGDGYDDCNDDDSQGAYTYPYGRYLYGRRFGLRRFGNPFFRFRRFGFGPVGGLNFRLGGFGYPYGGYGNLLSRFRGYGGYGNLLGGIRGYGNVLGGYGNVLGGYGNMLGGYGNILGGYGNMLGGYGNLGGYRGYGYQLRGYGGYGSFPDNYGRYSVGSYLRRRRRKKY.

The first 19 residues, 1–19 (MRILANLILLGVLFGVCLC), serve as a signal peptide directing secretion.

Prismatic layer of shell (at protein level).

It is found in the secreted. The protein is Shematrin-like protein 2 of Margaritifera margaritifera (Freshwater pearl mussel).